Consider the following 888-residue polypeptide: Autophagy-related protein 9 (888 aa).

The tract at residues Met1 to Pro170 is disordered. Topologically, residues Met1–Asn255 are cytoplasmic. The segment covering Ser13–Arg24 has biased composition (polar residues). Residues Asp28 to Glu38 show a composition bias toward acidic residues. Positions Arg123–Thr143 are enriched in polar residues. A helical membrane pass occupies residues Phe256–Ile276. Residues Arg277 to Arg422 are Lumenal-facing. A helical transmembrane segment spans residues Phe423–Ile443. The Cytoplasmic portion of the chain corresponds to Val444–Arg511. An intramembrane segment occupies Thr512–Ser532. The Cytoplasmic segment spans residues Glu533–Arg544. Residues Pro545–Ser565 form a helical membrane-spanning segment. Residues Glu566–Lys611 lie on the Lumenal side of the membrane. A helical transmembrane segment spans residues Val612–Ser632. At Leu633–Asp642 the chain is on the cytoplasmic side. An intramembrane segment occupies Phe643 to Phe663. The Cytoplasmic portion of the chain corresponds to Asp664–Val888. 2 disordered regions span residues Gly748 to Gly770 and Glu834 to Ala866.

It belongs to the ATG9 family. As to quaternary structure, homotrimer; forms a homotrimer with a central pore that forms a path between the two membrane leaflets. Post-translationally, phosphorylated by ATG1. ATG1 phosphorylation is required for ATG18 interaction and preautophagosome elongation.

The protein resides in the preautophagosomal structure membrane. The protein localises to the cytoplasmic vesicle membrane. It localises to the golgi apparatus membrane. It is found in the endoplasmic reticulum membrane. The catalysed reaction is a 1,2-diacyl-sn-glycero-3-phosphocholine(in) = a 1,2-diacyl-sn-glycero-3-phosphocholine(out). It catalyses the reaction a 1,2-diacyl-sn-glycero-3-phospho-L-serine(in) = a 1,2-diacyl-sn-glycero-3-phospho-L-serine(out). It carries out the reaction a 1,2-diacyl-sn-glycero-3-phosphoethanolamine(in) = a 1,2-diacyl-sn-glycero-3-phosphoethanolamine(out). The enzyme catalyses a 1,2-diacyl-sn-glycero-3-phospho-(1D-myo-inositol-3-phosphate)(in) = a 1,2-diacyl-sn-glycero-3-phospho-(1D-myo-inositol-3-phosphate)(out). In terms of biological role, phospholipid scramblase involved in autophagy and cytoplasm to vacuole transport (Cvt) vesicle formation. Cycles between the preautophagosomal structure/phagophore assembly site (PAS) and the cytoplasmic vesicle pool and supplies membrane for the growing autophagosome. Lipid scramblase activity plays a key role in preautophagosomal structure/phagophore assembly by distributing the phospholipids that arrive through ATG2 from the cytoplasmic to the luminal leaflet of the bilayer, thereby driving autophagosomal membrane expansion. Required for mitophagy. Also involved in endoplasmic reticulum-specific autophagic process and is essential for the survival of cells subjected to severe ER stress. Different machineries are required for anterograde trafficking to the PAS during either the Cvt pathway or bulk autophagy and for retrograde trafficking. Autophagy is required for proper vegetative growth, asexual/sexual reproduction, and full virulence. Autophagy is particularly involved in the biosynthesis of deoxynivalenol (DON), an important virulence determinant. Required for aerial hyphae development and lipid droplet degradation in response to starvation. The protein is Autophagy-related protein 9 of Gibberella zeae (strain ATCC MYA-4620 / CBS 123657 / FGSC 9075 / NRRL 31084 / PH-1) (Wheat head blight fungus).